The primary structure comprises 465 residues: Alpha-2A adrenergic receptor (465 aa).

The Extracellular segment spans residues 1-48; that stretch reads MFRQEQPLAEGSFAPMGSLQPEAGNASWNGTEAPGGGARATPYSLQVT. Residues N25 and N29 are each glycosylated (N-linked (GlcNAc...) asparagine). A helical transmembrane segment spans residues 49 to 74; sequence LTLVCLAGLLMLFTVFGNVLVIIAVF. Topologically, residues 75-85 are cytoplasmic; sequence TSRALKAPQNL. Residues 86–111 form a helical membrane-spanning segment; it reads FLVSLASADILVATLVIPFSLANEVM. At 112–121 the chain is on the extracellular side; sequence GYWYFGKAWC. Cysteines 121 and 203 form a disulfide. Residues 122-144 traverse the membrane as a helical segment; sequence EIYLALDVLFCTSSIVHLCAISL. The Cytoplasmic portion of the chain corresponds to 145–164; sequence DRYWSITQAIEYNLKRTPRR. The chain crosses the membrane as a helical span at residues 165-188; the sequence is IKAIIVTVWVISAVISFPPLISIE. The Extracellular segment spans residues 189–207; the sequence is KKAGGGGQQPAEPRCEIND. Residues 208 to 232 form a helical membrane-spanning segment; the sequence is QKWYVISSCIGSFFAPCLIMILVYV. Residues 233-389 are Cytoplasmic-facing; it reads RIYQIAKRRT…RQNREKRFTF (157 aa). Residues 242 to 377 are disordered; sequence TRVPPSRRGP…RGGVAKASRW (136 aa). The span at 313-330 shows a compositional bias: basic and acidic residues; sequence SSEHAERPPGPRRSERGP. S346 bears the Phosphoserine mark. R368 is modified (omega-N-methylarginine). The chain crosses the membrane as a helical span at residues 390 to 414; the sequence is VLAVVIGVFVVCWFPFFFTYTLTAV. At 415–424 the chain is on the extracellular side; it reads GCSVPPTLFK. The chain crosses the membrane as a helical span at residues 425-445; the sequence is FFFWFGYCNSSLNPVIYTIFN. At 446-465 the chain is on the cytoplasmic side; sequence HDFRRAFKKILCRGDRKRIV. A lipid anchor (S-palmitoyl cysteine) is attached at C457.

It belongs to the G-protein coupled receptor 1 family. Adrenergic receptor subfamily. ADRA2A sub-subfamily.

The protein resides in the cell membrane. In terms of biological role, alpha-2 adrenergic receptors mediate the catecholamine-induced inhibition of adenylate cyclase through the action of G proteins. The chain is Alpha-2A adrenergic receptor from Sus scrofa (Pig).